A 68-amino-acid polypeptide reads, in one-letter code: uncharacterized protein (68 aa).

This is an uncharacterized protein from Haemophilus influenzae (strain ATCC 51907 / DSM 11121 / KW20 / Rd).